The chain runs to 213 residues: Orotate phosphoribosyltransferase (213 aa).

Residue Lys-26 participates in 5-phospho-alpha-D-ribose 1-diphosphate binding. Phe-34–Phe-35 is an orotate binding site. 5-phospho-alpha-D-ribose 1-diphosphate contacts are provided by residues Tyr-72–Lys-73, Arg-99, Lys-100, Lys-103, His-105, and Asp-124–Ala-132. Thr-128 and Arg-156 together coordinate orotate.

The protein belongs to the purine/pyrimidine phosphoribosyltransferase family. PyrE subfamily. As to quaternary structure, homodimer. Mg(2+) is required as a cofactor.

The catalysed reaction is orotidine 5'-phosphate + diphosphate = orotate + 5-phospho-alpha-D-ribose 1-diphosphate. It functions in the pathway pyrimidine metabolism; UMP biosynthesis via de novo pathway; UMP from orotate: step 1/2. Its function is as follows. Catalyzes the transfer of a ribosyl phosphate group from 5-phosphoribose 1-diphosphate to orotate, leading to the formation of orotidine monophosphate (OMP). In Pseudomonas syringae pv. syringae (strain B728a), this protein is Orotate phosphoribosyltransferase.